Consider the following 68-residue polypeptide: Large ribosomal subunit protein bL35 (68 aa).

Residues 1–25 (MGTKIKTHKGTKKRFRLSAKGKAMH) are compositionally biased toward basic residues. The disordered stretch occupies residues 1 to 43 (MGTKIKTHKGTKKRFRLSAKGKAMHRQSGTSHLAKGLSKKRRR).

This sequence belongs to the bacterial ribosomal protein bL35 family.

The sequence is that of Large ribosomal subunit protein bL35 from Rhodopirellula baltica (strain DSM 10527 / NCIMB 13988 / SH1).